We begin with the raw amino-acid sequence, 82 residues long: ATP synthase subunit c (82 aa).

2 helical membrane-spanning segments follow: residues 7–27 (FVAL…CIGI) and 53–73 (FLLA…AMMF).

The protein belongs to the ATPase C chain family. As to quaternary structure, F-type ATPases have 2 components, F(1) - the catalytic core - and F(0) - the membrane proton channel. F(1) has five subunits: alpha(3), beta(3), gamma(1), delta(1), epsilon(1). F(0) has three main subunits: a(1), b(2) and c(10-14). The alpha and beta chains form an alternating ring which encloses part of the gamma chain. F(1) is attached to F(0) by a central stalk formed by the gamma and epsilon chains, while a peripheral stalk is formed by the delta and b chains.

The protein localises to the cell inner membrane. F(1)F(0) ATP synthase produces ATP from ADP in the presence of a proton or sodium gradient. F-type ATPases consist of two structural domains, F(1) containing the extramembraneous catalytic core and F(0) containing the membrane proton channel, linked together by a central stalk and a peripheral stalk. During catalysis, ATP synthesis in the catalytic domain of F(1) is coupled via a rotary mechanism of the central stalk subunits to proton translocation. In terms of biological role, key component of the F(0) channel; it plays a direct role in translocation across the membrane. A homomeric c-ring of between 10-14 subunits forms the central stalk rotor element with the F(1) delta and epsilon subunits. The sequence is that of ATP synthase subunit c from Aromatoleum aromaticum (strain DSM 19018 / LMG 30748 / EbN1) (Azoarcus sp. (strain EbN1)).